A 254-amino-acid polypeptide reads, in one-letter code: Protein PET122, mitochondrial (254 aa).

The N-terminal 8 residues, 1 to 8 (MLTITKRL), are a transit peptide targeting the mitochondrion. An essential for PET122 function region spans residues 185 to 254 (QAAALALFGR…IKRRGFEINT (70 aa)).

The protein localises to the mitochondrion inner membrane. Functionally, required for expression of the mitochondrial gene for cytochrome c oxidase subunit 3 (COX3). PET122 seems to work by directly interacting with the small ribosomal subunit to promote translation initiation on the COX3 mRNA. The polypeptide is Protein PET122, mitochondrial (PET122) (Saccharomyces cerevisiae (strain ATCC 204508 / S288c) (Baker's yeast)).